A 95-amino-acid chain; its full sequence is Protein TusB (95 aa).

Belongs to the DsrH/TusB family. In terms of assembly, heterohexamer, formed by a dimer of trimers. The hexameric TusBCD complex contains 2 copies each of TusB, TusC and TusD. The TusBCD complex interacts with TusE.

It localises to the cytoplasm. Part of a sulfur-relay system required for 2-thiolation of 5-methylaminomethyl-2-thiouridine (mnm(5)s(2)U) at tRNA wobble positions. The protein is Protein TusB of Klebsiella pneumoniae subsp. pneumoniae (strain ATCC 700721 / MGH 78578).